We begin with the raw amino-acid sequence, 347 residues long: Probable arabinogalactan endo-beta-1,4-galactanase A (347 aa).

An N-terminal signal peptide occupies residues 1–16 (MLFSYLLATLPLLANA). The active-site Proton donor is E150. Residue E260 is the Nucleophile of the active site.

Belongs to the glycosyl hydrolase 53 family.

Its subcellular location is the secreted. The catalysed reaction is The enzyme specifically hydrolyzes (1-&gt;4)-beta-D-galactosidic linkages in type I arabinogalactans.. Endogalactanase involved in the degradation of plant cell wall polysaccharides, and more particularly of hairy regions of pectin. In Aspergillus flavus (strain ATCC 200026 / FGSC A1120 / IAM 13836 / NRRL 3357 / JCM 12722 / SRRC 167), this protein is Probable arabinogalactan endo-beta-1,4-galactanase A (galA).